We begin with the raw amino-acid sequence, 283 residues long: Polyamine aminopropyltransferase (283 aa).

The 236-residue stretch at 5-240 folds into the PABS domain; the sequence is NTWFTEIHQD…GWWTATMACK (236 aa). Q33 contributes to the S-methyl-5'-thioadenosine binding site. H64 and D88 together coordinate spermidine. S-methyl-5'-thioadenosine contacts are provided by residues D108 and 139 to 140; that span reads DG. D158 serves as the catalytic Proton acceptor. Position 158–161 (158–161) interacts with spermidine; it reads DSTD. P165 lines the S-methyl-5'-thioadenosine pocket.

This sequence belongs to the spermidine/spermine synthase family. In terms of assembly, homodimer or homotetramer.

The protein resides in the cytoplasm. The catalysed reaction is S-adenosyl 3-(methylsulfanyl)propylamine + putrescine = S-methyl-5'-thioadenosine + spermidine + H(+). It participates in amine and polyamine biosynthesis; spermidine biosynthesis; spermidine from putrescine: step 1/1. Catalyzes the irreversible transfer of a propylamine group from the amino donor S-adenosylmethioninamine (decarboxy-AdoMet) to putrescine (1,4-diaminobutane) to yield spermidine. This chain is Polyamine aminopropyltransferase, found in Thioalkalivibrio sulfidiphilus (strain HL-EbGR7).